Reading from the N-terminus, the 375-residue chain is Succinyl-diaminopimelate desuccinylase (375 aa).

Residue His66 coordinates Zn(2+). Residue Asp68 is part of the active site. Asp99 is a binding site for Zn(2+). The Proton acceptor role is filled by Glu133. Residues Glu134, Glu162, and His348 each contribute to the Zn(2+) site.

It belongs to the peptidase M20A family. DapE subfamily. In terms of assembly, homodimer. The cofactor is Zn(2+). Co(2+) serves as cofactor.

It carries out the reaction N-succinyl-(2S,6S)-2,6-diaminopimelate + H2O = (2S,6S)-2,6-diaminopimelate + succinate. It participates in amino-acid biosynthesis; L-lysine biosynthesis via DAP pathway; LL-2,6-diaminopimelate from (S)-tetrahydrodipicolinate (succinylase route): step 3/3. Functionally, catalyzes the hydrolysis of N-succinyl-L,L-diaminopimelic acid (SDAP), forming succinate and LL-2,6-diaminopimelate (DAP), an intermediate involved in the bacterial biosynthesis of lysine and meso-diaminopimelic acid, an essential component of bacterial cell walls. The protein is Succinyl-diaminopimelate desuccinylase of Serratia proteamaculans (strain 568).